The sequence spans 240 residues: MNTENLLKNNNVDHEEIAKFEAVASRWWDLEGEFKPLHRINPLRLGYIAERAGGLFGKKVLDVGCGGGILAESMAREGATVTGLDMGFEPLQVAKLHALESGIQVEYVQETVEEHAAKHAGQYDVVTCMEMLEHVPDPQSVVRACAQLVKPGGDVFFSTLNRNGKSWLMAVVGAEYILRMVPKGTHDVKKFIKPAELLGWVDQTSLKERHMTGLHYNPITNSFKLGPGVDVNYMLHTQNK.

Residues R44, G64, D85, and M129 each contribute to the S-adenosyl-L-methionine site.

This sequence belongs to the methyltransferase superfamily. UbiG/COQ3 family.

The enzyme catalyses a 3-demethylubiquinol + S-adenosyl-L-methionine = a ubiquinol + S-adenosyl-L-homocysteine + H(+). It catalyses the reaction a 3-(all-trans-polyprenyl)benzene-1,2-diol + S-adenosyl-L-methionine = a 2-methoxy-6-(all-trans-polyprenyl)phenol + S-adenosyl-L-homocysteine + H(+). Its pathway is cofactor biosynthesis; ubiquinone biosynthesis. Its function is as follows. O-methyltransferase that catalyzes the 2 O-methylation steps in the ubiquinone biosynthetic pathway. This chain is Ubiquinone biosynthesis O-methyltransferase, found in Escherichia coli O7:K1 (strain IAI39 / ExPEC).